The following is a 537-amino-acid chain: MAAAAADLVIGWCIFGLLLLAILAFCWVYVRKYQSQRESEVVSTVTAIFSLAVALITSALLPVDIFLVSYMKNQNGTFKDWANANVTVQIENTVLYGYYTLYSVILFCVFFWIPFVYFYYEEKDDDDTSKCTQVKTALKYTLGFVVICALLLLVGAFVPLNLPNNNNSTEWEKVKLLFEDLGTGQGLAALSFSISSLTLIGMLAAITYTAYGMSALPLNLIKGTRSTAYERLENTEDIEEVEQHIQTIRSKSKDGRPLSARDRRTLKQCEERLRTLRKRERHLEFIENSWWTKFCGALRPLKIIWGIFFILVALLFVISLFLSNLDKALHSAGIDSGFIVFGTNLSNPLNMLLPLLQTVFPLDYILITIIIMYFIFTSMAGIRNIGIWFFWIRLYKIRRGRTRPQALLFLCMILLLIVLHTSYMIYSLAPQYVMYGSQNYLIESNITSDAHKGNSTLAVPKRCDADAPKDQCTVTRTYVFLHKFWFFSAAYYFGNWAFLVVFLIGLIVSCCKGKKSVIEGVDEDSDLSDDEPSAYSA.

Topologically, residues M1–D7 are extracellular. A helical transmembrane segment spans residues L8–V28. Residues Y29–A47 are Cytoplasmic-facing. Residues I48–V68 traverse the membrane as a helical segment. Topologically, residues S69–G97 are extracellular. N-linked (GlcNAc...) asparagine glycosylation is found at N75 and N85. Residues Y98–F118 form a helical membrane-spanning segment. Over Y119–T141 the chain is Cytoplasmic. Residues L142 to L162 form a helical membrane-spanning segment. The Extracellular segment spans residues P163–Q185. N-linked (GlcNAc...) asparagine glycosylation is found at N166 and N167. Residues G186–I206 form a helical membrane-spanning segment. The Cytoplasmic segment spans residues T207 to K302. The short motif at Y229–L232 is the YERL motif; mediates interaction with adapter protein complex 2 and is essential for its function in clathrin-mediated endocytosis of INSR element. T235 is modified (phosphothreonine). Positions W291–F294 match the WTKF motif; mediates interaction with adapter protein complex 2 and is essential for its function in clathrin-mediated endocytosis of INSR motif. The chain crosses the membrane as a helical span at residues I303 to S323. At N324–P361 the chain is on the extracellular side. N-linked (GlcNAc...) asparagine glycosylation occurs at N344. The helical transmembrane segment at L362–I382 threads the bilayer. The Cytoplasmic segment spans residues R383–Q405. A helical transmembrane segment spans residues A406 to Y426. Topologically, residues S427–K483 are extracellular. N445 and N454 each carry an N-linked (GlcNAc...) asparagine glycan. Residues F484–I504 form a helical membrane-spanning segment. Over G505–A537 the chain is Cytoplasmic. A phosphoserine mark is found at S525 and S528.

It belongs to the LIMR family. LMBRD1 subfamily. Interacts with ABCD4; this interaction induces the translocation of ABCD4 from the endoplasmic reticulum to the lysosome. Interacts with ABCD4 and MMACHC; this interaction ensures the transport of cobalamin from the lysosome to the cytoplasm. Interacts with INSR, adapter protein complex 2 and clathrin heavy chain. In terms of processing, N-glycosylated.

Its subcellular location is the endoplasmic reticulum membrane. It is found in the lysosome membrane. The protein localises to the cell membrane. It localises to the cytoplasmic vesicle. The protein resides in the clathrin-coated vesicle. Its function is as follows. Lysosomal membrane chaperone required to export cobalamin (vitamin B12) from the lysosome to the cytosol, allowing its conversion to cofactors. Targets ABCD4 transporter from the endoplasmic reticulum to the lysosome. Then forms a complex with lysosomal ABCD4 and cytoplasmic MMACHC to transport cobalamin across the lysosomal membrane. Acts as an adapter protein which plays an important role in mediating and regulating the internalization of the insulin receptor (INSR). Involved in clathrin-mediated endocytosis of INSR via its interaction with adapter protein complex 2. Essential for the initiation of gastrulation and early formation of mesoderm structures during embryogenesis. The polypeptide is Lysosomal cobalamin transport escort protein LMBD1 (Lmbrd1) (Rattus norvegicus (Rat)).